The following is a 132-amino-acid chain: Small ribosomal subunit protein uS8 (132 aa).

The protein belongs to the universal ribosomal protein uS8 family. Part of the 30S ribosomal subunit. Contacts proteins S5 and S12.

In terms of biological role, one of the primary rRNA binding proteins, it binds directly to 16S rRNA central domain where it helps coordinate assembly of the platform of the 30S subunit. The protein is Small ribosomal subunit protein uS8 of Streptococcus pneumoniae serotype 19F (strain G54).